We begin with the raw amino-acid sequence, 366 residues long: Caffeic acid 3-O-methyltransferase (366 aa).

131–137 (MNQDKIL) serves as a coordination point for substrate. Positions 163–181 (AFEYHGTDPRFNKIFNRGM) are substrate binding. Residues Gly-209, Asp-232, Asp-252, Met-253, and Lys-266 each coordinate S-adenosyl-L-methionine. His-270 functions as the Proton acceptor in the catalytic mechanism.

The protein belongs to the class I-like SAM-binding methyltransferase superfamily. Cation-independent O-methyltransferase family. COMT subfamily. Homodimer.

It carries out the reaction (E)-caffeate + S-adenosyl-L-methionine = (E)-ferulate + S-adenosyl-L-homocysteine + H(+). The protein operates within aromatic compound metabolism; phenylpropanoid biosynthesis. Functionally, catalyzes the conversion of caffeic acid to ferulic acid and of 5-hydroxyferulic acid to sinapic acid. The resulting products may subsequently be converted to the corresponding alcohols that are incorporated into lignins. The protein is Caffeic acid 3-O-methyltransferase (OMT) of Eucalyptus gunnii (Cider gum).